Here is a 603-residue protein sequence, read N- to C-terminus: Penicillin-binding protein activator LpoA (603 aa).

The N-terminal stretch at 1–24 (MINHKRLSVPRILTPVALAITLAA) is a signal peptide. Cys25 carries N-palmitoyl cysteine lipidation. A lipid anchor (S-diacylglycerol cysteine) is attached at Cys25.

This sequence belongs to the LpoA family. In terms of assembly, interacts with PBP1a.

It is found in the cell outer membrane. In terms of biological role, regulator of peptidoglycan synthesis that is essential for the function of penicillin-binding protein 1A (PBP1a). The chain is Penicillin-binding protein activator LpoA from Vibrio antiquarius (strain Ex25).